Here is a 36-residue protein sequence, read N- to C-terminus: GSCLELGKYCDGSKDDCQCCRDNAYCGCDIFGYNWE.

In terms of tissue distribution, expressed by the venom gland.

The protein localises to the secreted. In terms of biological role, not toxic to mice by intracerebroventricular injection. This chain is U14-ctenitoxin-Co1b, found in Ctenus ornatus (Brazilian spider).